The sequence spans 160 residues: Sec-independent protein translocase protein TatB (160 aa).

Residues 1 to 21 (MFGMGFFEILVVLIVAIIFLG) form a helical membrane-spanning segment. A disordered region spans residues 118–160 (HLNEEVSNEEALNKEVSSDESPKEVQLTTDNNAKEHDKEKEHV). 2 stretches are compositionally biased toward basic and acidic residues: residues 128-140 (ALNK…ESPK) and 149-160 (NAKEHDKEKEHV).

The protein belongs to the TatB family. As to quaternary structure, the Tat system comprises two distinct complexes: a TatABC complex, containing multiple copies of TatA, TatB and TatC subunits, and a separate TatA complex, containing only TatA subunits. Substrates initially bind to the TatABC complex, which probably triggers association of the separate TatA complex to form the active translocon.

The protein resides in the cell inner membrane. Its function is as follows. Part of the twin-arginine translocation (Tat) system that transports large folded proteins containing a characteristic twin-arginine motif in their signal peptide across membranes. Together with TatC, TatB is part of a receptor directly interacting with Tat signal peptides. TatB may form an oligomeric binding site that transiently accommodates folded Tat precursor proteins before their translocation. This chain is Sec-independent protein translocase protein TatB, found in Helicobacter pylori (strain J99 / ATCC 700824) (Campylobacter pylori J99).